The chain runs to 333 residues: DNA-directed RNA polymerase subunit alpha (333 aa).

Positions 1-233 (MVQEKLRFST…DLFIPFLHAE (233 aa)) are alpha N-terminal domain (alpha-NTD). The tract at residues 266–333 (KKEIALKSIF…DILKIQKYFT (68 aa)) is alpha C-terminal domain (alpha-CTD).

This sequence belongs to the RNA polymerase alpha chain family. In terms of assembly, in plastids the minimal PEP RNA polymerase catalytic core is composed of four subunits: alpha, beta, beta', and beta''. When a (nuclear-encoded) sigma factor is associated with the core the holoenzyme is formed, which can initiate transcription.

The protein resides in the plastid. It is found in the chloroplast. It catalyses the reaction RNA(n) + a ribonucleoside 5'-triphosphate = RNA(n+1) + diphosphate. Functionally, DNA-dependent RNA polymerase catalyzes the transcription of DNA into RNA using the four ribonucleoside triphosphates as substrates. This Phaseolus angularis (Azuki bean) protein is DNA-directed RNA polymerase subunit alpha.